Consider the following 593-residue polypeptide: FAD-binding monooxygenase acrE (593 aa).

Residues 61–64 (TWRF), 73–74 (DS), and Y79 contribute to the FAD site. Residue 71–73 (RVD) coordinates NADP(+). NADP(+)-binding positions include 200–206 (TGASGVQ) and 223–224 (RS).

It belongs to the FAD-binding monooxygenase family. Requires FAD as cofactor.

The protein operates within secondary metabolite biosynthesis. In terms of biological role, FAD-binding monooxygenase; part of the cluster that mediates the biosynthesis of acurin A, a highly reduced polyketide coupled to a serine via a peptide bond. The activities of the highly reducing polyketide synthase acrA and the nonribosomal peptide synthetase acrB are collectively responsible for the synthesis of the acurin A core structure with a heptaketide backbone produced by acrA covalently fused to a L-serine by acrB. After the formation of the PK-NRP hybrid product, it is detached from acrB by reductive release to set up the formation of the lactam ring by aldol condensation. The hydrolyase acrC then catalyzes water loss to generate a double bond in the ring. This double bond is probably reduced, which is followed by three oxidations at C-22 to generate the carboxylic acid moiety, involving probably the FAD-binding monooxygenase acrE and the cytochrome P450 monooxygenases acrD and acrF. Finally, a last methylation step performed by the O-methyltransferase acrG leads to the production of acurin A. This chain is FAD-binding monooxygenase acrE, found in Aspergillus aculeatus (strain ATCC 16872 / CBS 172.66 / WB 5094).